The chain runs to 1105 residues: MSSNSFAYNEQSGGGEAAELGQEATSTISPSGAFGLFSSDWKKNEDLKQMLESNKDSAKLDAMKRIVGMIAKGKNASELFPAVVKNVASKNIEIKKLVYVYLVRYAEEQQDLALLSISTFQRALKDPNQLIRASALRVLSSIRVPIIVPVMMLAIKEASADLSPYVRKNAAHAIQKLYSLDPEQKEMLIEVIEKLLKDKSTLVAGSVVMAFEEVCPDRIDLIHRNYRKLCNLLVDVEEWGQVVIIHMLTRYARTQFVSPWREDGGLEDNEKNFYESEEEEEEKEKSSRKKSYAMDPDHRLLIRNTKPLLQSRNAAVVMAVAQLYWHISPKSEAGVISKSLVRLLRSNREVQYIVLQNIATMSIERKGMFEPYLKSFYVRSTDPTMIKTLKLEILTNLANEANISTLLREFQTYVRSQDKQFAAATIQTIGRCATSISEVTDTCLNGLVCLLSNRDEIVVAESVVVIKKLLQMQPAQHGEIIRHMAKLLDSITVPVARASILWLIGENCERVPKIAPDVLRKMAKSFTSEDDLVKLQILNLAAKLYLTNSKQTKLLTQYILNLGKYDQNYDIRDRTRFIRQLIVPNEKSGALSKYAKKIFLAPKPAPLLESPFKDRDRFQLGTLSHTLNIKASGYLELSNWPEVAPDPSVRNVEVIESAKEWTPLGKTKKEKPMKKFYSESEEEEDEDEDEDEEEEEKEDEDENPSDSSSDSESGSGSESGDTGTEDSSEDSSSGQDSETGSQAEAERQKVAKRNSKTKRKSDSENREKKNENSKASESSSEESSSMEDSSSESESESGSDSEPAPRNVAPAKERKPQQERHPPSKDVFLLDLDDFNPVSTPVALPTPALSPSLIADLEGLNLSTSSSVINVSTPVFVPTKTHELLHRMHGKGLAAHYCFPRQPCIFSDKMVSVQITLTNTSDRKIENIHIGGKGLPVGMQMHAFHPIDSLEPKGSVTVSVGIDFCDSTQTASFQLCTKDDCFNVTLQPPVGELLSPVAMSEKDFKKEQGTLTGMNETSATLIAAPQNFTPSMILQKVVNVANLGAVPSSQDNVHRFAARTVHSGSLMLVTVELKEGSTAQLIINTEKTVIGSVLLRELKPVLSQG.

Disordered regions lie at residues 1-26 (MSSN…EATS) and 271-292 (KNFY…KKSY). Residues Ser276 and Ser610 each carry the phosphoserine modification. Residues 668–824 (KKEKPMKKFY…KPQQERHPPS (157 aa)) form a disordered region. Residues 679-704 (ESEEEEDEDEDEDEEEEEKEDEDENP) show a composition bias toward acidic residues. Composition is skewed to low complexity over residues 705 to 722 (SDSS…SGDT) and 730 to 741 (DSSSGQDSETGS). Over residues 750–759 (VAKRNSKTKR) the composition is skewed to basic residues. The span at 760–774 (KSDSENREKKNENSK) shows a compositional bias: basic and acidic residues. 2 positions are modified to phosphoserine: Ser761 and Ser763. Low complexity predominate over residues 775-788 (ASESSSEESSSMED). Acidic residues predominate over residues 789–799 (SSSESESESGS). Residues 811–824 (AKERKPQQERHPPS) show a composition bias toward basic and acidic residues.

The protein belongs to the adaptor complexes large subunit family. As to quaternary structure, adaptor protein complex 3 (AP-3) is a heterotetramer composed of two large adaptins (delta-type subunit AP3D1 and beta-type subunit AP3B1 or AP3B2), a medium adaptin (mu-type subunit AP3M1 or AP3M2) and a small adaptin (sigma-type subunit APS1 or AP3S2). AP-3 associates with the BLOC-1 complex. Interacts with KIF3A; interaction is direct; interaction is impaired by pyrophosphorylation of AP3B1. Post-translationally, phosphorylated on serine residues. Pyrophosphorylated by 5-diphosphoinositol pentakisphosphate (5-IP7). Pyrophosphorylation impairs interaction with KIF3A. Serine pyrophosphorylation is achieved by Mg(2+)-dependent, but enzyme independent transfer of a beta-phosphate from a inositol pyrophosphate to a pre-phosphorylated serine residue. Ubiquitously expressed.

It localises to the cytoplasmic vesicle. The protein localises to the clathrin-coated vesicle membrane. Its subcellular location is the golgi apparatus. In terms of biological role, subunit of non-clathrin- and clathrin-associated adaptor protein complex 3 (AP-3) that plays a role in protein sorting in the late-Golgi/trans-Golgi network (TGN) and/or endosomes. The AP complexes mediate both the recruitment of clathrin to membranes and the recognition of sorting signals within the cytosolic tails of transmembrane cargo molecules. AP-3 appears to be involved in the sorting of a subset of transmembrane proteins targeted to lysosomes and lysosome-related organelles. In concert with the BLOC-1 complex, AP-3 is required to target cargos into vesicles assembled at cell bodies for delivery into neurites and nerve terminals. In Mus musculus (Mouse), this protein is AP-3 complex subunit beta-1 (Ap3b1).